Consider the following 351-residue polypeptide: Protein RecA (351 aa).

An ATP-binding site is contributed by 68–75; it reads GPESSGKT.

The protein belongs to the RecA family.

The protein resides in the cytoplasm. Functionally, can catalyze the hydrolysis of ATP in the presence of single-stranded DNA, the ATP-dependent uptake of single-stranded DNA by duplex DNA, and the ATP-dependent hybridization of homologous single-stranded DNAs. It interacts with LexA causing its activation and leading to its autocatalytic cleavage. This Chloroflexus aurantiacus (strain ATCC 29364 / DSM 637 / Y-400-fl) protein is Protein RecA.